The primary structure comprises 300 residues: Epimerase family protein SAV0769 (300 aa).

It belongs to the NAD(P)-dependent epimerase/dehydratase family. SDR39U1 subfamily.

The polypeptide is Epimerase family protein SAV0769 (Staphylococcus aureus (strain Mu50 / ATCC 700699)).